Here is a 206-residue protein sequence, read N- to C-terminus: Large ribosomal subunit protein uL4 (206 aa).

Belongs to the universal ribosomal protein uL4 family. In terms of assembly, part of the 50S ribosomal subunit.

Functionally, one of the primary rRNA binding proteins, this protein initially binds near the 5'-end of the 23S rRNA. It is important during the early stages of 50S assembly. It makes multiple contacts with different domains of the 23S rRNA in the assembled 50S subunit and ribosome. Forms part of the polypeptide exit tunnel. This Bradyrhizobium sp. (strain BTAi1 / ATCC BAA-1182) protein is Large ribosomal subunit protein uL4.